The primary structure comprises 337 residues: MASALYACTKCHQRYPFEELSQGQQLCKECRIAHPIVKCTYCRSEFQQESKTNTICKKCAQNVKQFGTPKPCQYCNIIAAFIGTKCQRCTNSEKKYGPPQTCEQCKQQCAFDRKEEGRRKVDGKLLCWLCTLSYKRVLQKTKEQRKSLGSTHSNSSSSSLTEKDQHHSKHHHHHHHHHRHSSSHHKISSLSPEPEQGIWKQSHKSSTVIQNETPKKKPKLEFKPSNGDSSSINQSTDSGGTDNFVLISQLKEEVMSLKRLLQQRDQTILEKDKKLTELKADFQYQENNLRTKMNGMDKAHKDFVEQLQGKNRELLKQVAALSKGKKFDKSGSILTSP.

Residues 143–241 are disordered; that stretch reads EQRKSLGSTH…INQSTDSGGT (99 aa). The segment covering 147–159 has biased composition (low complexity); the sequence is SLGSTHSNSSSSS. Over residues 166-187 the composition is skewed to basic residues; sequence HHSKHHHHHHHHHRHSSSHHKI. A compositionally biased stretch (basic and acidic residues) spans 213–222; it reads TPKKKPKLEF. Positions 226 to 241 are enriched in polar residues; it reads NGDSSSINQSTDSGGT. Residues 301 to 326 adopt a coiled-coil conformation; the sequence is KDFVEQLQGKNRELLKQVAALSKGKK.

This sequence belongs to the FAM76 family.

Functionally, plays a role in hematopoiesis and immune system development, and participates in the inflammatory response. In Xenopus laevis (African clawed frog), this protein is Protein FAM76B (fam76b).